The following is a 226-amino-acid chain: Leucyl/phenylalanyl-tRNA--protein transferase (226 aa).

Belongs to the L/F-transferase family.

The protein localises to the cytoplasm. It catalyses the reaction N-terminal L-lysyl-[protein] + L-leucyl-tRNA(Leu) = N-terminal L-leucyl-L-lysyl-[protein] + tRNA(Leu) + H(+). It carries out the reaction N-terminal L-arginyl-[protein] + L-leucyl-tRNA(Leu) = N-terminal L-leucyl-L-arginyl-[protein] + tRNA(Leu) + H(+). The catalysed reaction is L-phenylalanyl-tRNA(Phe) + an N-terminal L-alpha-aminoacyl-[protein] = an N-terminal L-phenylalanyl-L-alpha-aminoacyl-[protein] + tRNA(Phe). Functionally, functions in the N-end rule pathway of protein degradation where it conjugates Leu, Phe and, less efficiently, Met from aminoacyl-tRNAs to the N-termini of proteins containing an N-terminal arginine or lysine. This chain is Leucyl/phenylalanyl-tRNA--protein transferase, found in Pseudomonas paraeruginosa (strain DSM 24068 / PA7) (Pseudomonas aeruginosa (strain PA7)).